The following is a 332-amino-acid chain: Chorismate synthase (332 aa).

R46 serves as a coordination point for NADP(+). FMN contacts are provided by residues 123 to 125 (HFS), G253, 268 to 272 (KPTSS), and R295.

This sequence belongs to the chorismate synthase family. As to quaternary structure, homotetramer. The cofactor is FMNH2.

The enzyme catalyses 5-O-(1-carboxyvinyl)-3-phosphoshikimate = chorismate + phosphate. Its pathway is metabolic intermediate biosynthesis; chorismate biosynthesis; chorismate from D-erythrose 4-phosphate and phosphoenolpyruvate: step 7/7. In terms of biological role, catalyzes the anti-1,4-elimination of the C-3 phosphate and the C-6 proR hydrogen from 5-enolpyruvylshikimate-3-phosphate (EPSP) to yield chorismate, which is the branch point compound that serves as the starting substrate for the three terminal pathways of aromatic amino acid biosynthesis. This reaction introduces a second double bond into the aromatic ring system. This Chitinophaga pinensis (strain ATCC 43595 / DSM 2588 / LMG 13176 / NBRC 15968 / NCIMB 11800 / UQM 2034) protein is Chorismate synthase.